The sequence spans 277 residues: Thiazole synthase (277 aa).

Lys-116 acts as the Schiff-base intermediate with DXP in catalysis. 1-deoxy-D-xylulose 5-phosphate is bound by residues Gly-177, 203–204 (AG), and 225–226 (NT).

This sequence belongs to the ThiG family. As to quaternary structure, homotetramer. Forms heterodimers with either ThiH or ThiS.

Its subcellular location is the cytoplasm. It catalyses the reaction [ThiS sulfur-carrier protein]-C-terminal-Gly-aminoethanethioate + 2-iminoacetate + 1-deoxy-D-xylulose 5-phosphate = [ThiS sulfur-carrier protein]-C-terminal Gly-Gly + 2-[(2R,5Z)-2-carboxy-4-methylthiazol-5(2H)-ylidene]ethyl phosphate + 2 H2O + H(+). It functions in the pathway cofactor biosynthesis; thiamine diphosphate biosynthesis. Its function is as follows. Catalyzes the rearrangement of 1-deoxy-D-xylulose 5-phosphate (DXP) to produce the thiazole phosphate moiety of thiamine. Sulfur is provided by the thiocarboxylate moiety of the carrier protein ThiS. In vitro, sulfur can be provided by H(2)S. This chain is Thiazole synthase, found in Thermosynechococcus vestitus (strain NIES-2133 / IAM M-273 / BP-1).